Consider the following 443-residue polypeptide: C4-dicarboxylate transport protein (443 aa).

The next 10 helical transmembrane spans lie at 10 to 30 (SLYFQVIVAIAIGILLGHFYP), 46 to 66 (LIKMVIAPIIFCTVVSGIAGM), 78 to 98 (YALLYFEIVSTIALLIGLIVV), 130 to 150 (SIVGFILNIIPATIVGAFANG), 152 to 172 (ILQVLMFSVVFGFALHRLGAY), 199 to 219 (PLGALGAMAFTIGAYGVGSLV), 224 to 244 (LMICFYITCVVFVLVVLGAIC), 291 to 311 (VVGLVIPTGYSFNLDGTSIYL), 332 to 352 (ITLLLVLLLSSKGAAGVTGSG), and 354 to 374 (IVLAATLSAVGHLPVAGLALI). The segment at 415-443 (ELASGGRPITDTRETDDLGVAEGPAPSIK) is disordered.

It belongs to the dicarboxylate/amino acid:cation symporter (DAACS) (TC 2.A.23) family.

Its subcellular location is the cell inner membrane. Its function is as follows. Responsible for the transport of dicarboxylates such as succinate, fumarate, and malate from the periplasm across the membrane. The chain is C4-dicarboxylate transport protein from Pseudomonas fluorescens (strain ATCC BAA-477 / NRRL B-23932 / Pf-5).